A 301-amino-acid polypeptide reads, in one-letter code: Protoheme IX farnesyltransferase (301 aa).

The next 9 membrane-spanning stretches (helical) occupy residues 20 to 42 (FTEL…GMWL), 55 to 75 (VDVI…SGAF), 105 to 125 (ALMV…MTTW), 126 to 146 (QAGV…SLYA), 150 to 172 (LVSN…WFAV), 176 to 198 (FSIV…FYAI), 227 to 247 (MFFW…LGLV), 249 to 269 (VILA…GFKM), and 280 to 300 (FVYS…ISIF).

Belongs to the UbiA prenyltransferase family. Protoheme IX farnesyltransferase subfamily. In terms of assembly, interacts with CtaA.

Its subcellular location is the cell membrane. The enzyme catalyses heme b + (2E,6E)-farnesyl diphosphate + H2O = Fe(II)-heme o + diphosphate. The protein operates within porphyrin-containing compound metabolism; heme O biosynthesis; heme O from protoheme: step 1/1. Functionally, converts heme B (protoheme IX) to heme O by substitution of the vinyl group on carbon 2 of heme B porphyrin ring with a hydroxyethyl farnesyl side group. The polypeptide is Protoheme IX farnesyltransferase (Listeria innocua serovar 6a (strain ATCC BAA-680 / CLIP 11262)).